A 587-amino-acid polypeptide reads, in one-letter code: Putative phagocytic receptor 1b (587 aa).

Positions M1–S23 are cleaved as a signal peptide. The next 9 helical transmembrane spans lie at L223–I243, I294–F314, G319–Y339, A354–L374, I390–V410, I448–N468, G480–L500, V524–L544, and I556–F576.

The protein belongs to the nonaspanin (TM9SF) (TC 9.A.2) family.

The protein resides in the membrane. Its function is as follows. Involved in adhesion and phagocytosis of hydrophilic particles. The chain is Putative phagocytic receptor 1b (phg1b) from Dictyostelium discoideum (Social amoeba).